Reading from the N-terminus, the 264-residue chain is Apolipoprotein A-I (264 aa).

A signal peptide spans 1–18 (MKAVVLTVAVLFLTGSQA). 2 consecutive repeat copies span residues 67–88 (LKLLDNWDTLGSSISKLREQLG) and 89–110 (PVTQEFWDNLEKDTEWLRQEMN). The tract at residues 67–264 (LKLLDNWDTL…DDAAKKLSSQ (198 aa)) is 10 X approximate tandem repeats. Residue M109 is modified to Methionine sulfoxide. A 3; half-length repeat occupies 111-121 (KDLEEVKQKVQ). 3 consecutive repeat copies span residues 122–143 (PYLEEFQKKWQEEVERYRQKVE), 144–165 (PLSTELREGARQKLQELQEKLT), and 166–187 (PLGEELRDHARTHVDVLRTQLA). Residues 188 to 207 (PYSDKMRERLAERLTALKDS) form a 7; truncated repeat. A Methionine sulfoxide modification is found at M193. Residues 208-229 (ASFAEYHAKASEHLKTLREKAK) form repeat 8. A 9; half-length repeat occupies 230–240 (PAIEDLGQGLL). Copy 10 of the repeat occupies 241-264 (PVLENLKASFLSAIDDAAKKLSSQ).

It belongs to the apolipoprotein A1/A4/E family. Homodimer. Interacts with APOA1BP and CLU. Component of a sperm activating protein complex (SPAP), consisting of APOA1, an immunoglobulin heavy chain, an immunoglobulin light chain and albumin. Interacts with NDRG1. Interacts with SCGB3A2. Interacts with NAXE and YJEFN3. Glycosylated. In terms of processing, palmitoylated. Post-translationally, phosphorylation sites are present in the extracellular medium.

It localises to the secreted. In terms of biological role, participates in the reverse transport of cholesterol from tissues to the liver for excretion by promoting cholesterol efflux from tissues and by acting as a cofactor for the lecithin cholesterol acyltransferase (LCAT). As part of the SPAP complex, activates spermatozoa motility. This chain is Apolipoprotein A-I (APOA1), found in Castor canadensis (American beaver).